Reading from the N-terminus, the 305-residue chain is Carbonic anhydrase 5A, mitochondrial (305 aa).

The N-terminal 38 residues, 1–38, are a transit peptide targeting the mitochondrion; the sequence is MLGRNTWKTSAFSFLVEQMWAPLWSRSMRPGRWCSQRS. The 258-residue stretch at 39–296 folds into the Alpha-carbonic anhydrase domain; the sequence is CAWQTSNNTL…LMNRKVWASF (258 aa). Zn(2+) contacts are provided by His-130, His-132, and His-155.

The protein belongs to the alpha-carbonic anhydrase family. The cofactor is Zn(2+).

It is found in the mitochondrion. The catalysed reaction is hydrogencarbonate + H(+) = CO2 + H2O. Activated by L- and D-histidine. Activated by L- and D-phenylalanine. Activated by L-adrenaline. Inhibited by coumarins, sulfonamide derivatives such as acetazolamide and Foscarnet (phosphonoformate trisodium salt). Activated by histamine. Functionally, mitochondrial carbonic anhydrase that catalyzes the reversible conversion of carbon dioxide to bicarbonate/HCO3. Mitochondria are impermeable to HCO3, and thus this intramitochondrial carbonic anhydrase is pivotal in providing HCO3 for multiple mitochondrial enzymes that catalyze the formation of essential metabolites of intermediary metabolism in the urea and Krebs cycles. The protein is Carbonic anhydrase 5A, mitochondrial of Homo sapiens (Human).